Here is a 98-residue protein sequence, read N- to C-terminus: Small ribosomal subunit protein uS17B (98 aa).

The protein belongs to the universal ribosomal protein uS17 family. As to quaternary structure, part of the 30S ribosomal subunit.

Its function is as follows. One of the primary rRNA binding proteins, it binds specifically to the 5'-end of 16S ribosomal RNA. The chain is Small ribosomal subunit protein uS17B from Bacteroides thetaiotaomicron (strain ATCC 29148 / DSM 2079 / JCM 5827 / CCUG 10774 / NCTC 10582 / VPI-5482 / E50).